A 91-amino-acid polypeptide reads, in one-letter code: Potassium channel toxin BmTXK-beta-2 (91 aa).

Positions 1-19 (MQRNLVVLLFLGMVALSSC) are cleaved as a signal peptide. The propeptide occupies 20–27 (GLREKHFQ). Positions 54–91 (QFGCPAYQGYCDDHCQDIKKEEGFCHGFKCKCGIPMGF) constitute a BetaSPN-type CS-alpha/beta domain. 3 disulfides stabilise this stretch: Cys57/Cys78, Cys64/Cys83, and Cys68/Cys85.

The protein belongs to the long chain scorpion toxin family. Class 1 subfamily. Expressed by the venom gland.

It localises to the secreted. In terms of biological role, inhibits voltage-gated potassium channel. This is Potassium channel toxin BmTXK-beta-2 from Olivierus martensii (Manchurian scorpion).